The chain runs to 375 residues: Tyrosine--tRNA ligase (375 aa).

Residues Tyr37, Tyr168, Gln172, Asp175, and Gln190 each coordinate L-tyrosine. Residues 251–255 (KMSKS) carry the 'KMSKS' region motif. Position 254 (Lys254) interacts with ATP.

This sequence belongs to the class-I aminoacyl-tRNA synthetase family. TyrS type 4 subfamily. As to quaternary structure, homodimer.

The protein localises to the cytoplasm. It carries out the reaction tRNA(Tyr) + L-tyrosine + ATP = L-tyrosyl-tRNA(Tyr) + AMP + diphosphate + H(+). Catalyzes the attachment of tyrosine to tRNA(Tyr) in a two-step reaction: tyrosine is first activated by ATP to form Tyr-AMP and then transferred to the acceptor end of tRNA(Tyr). In Thermococcus gammatolerans (strain DSM 15229 / JCM 11827 / EJ3), this protein is Tyrosine--tRNA ligase.